A 279-amino-acid chain; its full sequence is Polyamine aminopropyltransferase (279 aa).

The PABS domain maps to 4–237 (IEWYPRGYGV…SPWAFLVGIK (234 aa)). Q29 contacts S-methyl-5'-thioadenosine. H60 and D84 together coordinate spermidine. S-methyl-5'-thioadenosine contacts are provided by residues E104 and 141–142 (DG). D158 functions as the Proton acceptor in the catalytic mechanism. 158–161 (DSTD) contributes to the spermidine binding site. P165 contributes to the S-methyl-5'-thioadenosine binding site.

It belongs to the spermidine/spermine synthase family. As to quaternary structure, homodimer or homotetramer.

The protein resides in the cytoplasm. It catalyses the reaction S-adenosyl 3-(methylsulfanyl)propylamine + putrescine = S-methyl-5'-thioadenosine + spermidine + H(+). The protein operates within amine and polyamine biosynthesis; spermidine biosynthesis; spermidine from putrescine: step 1/1. Catalyzes the irreversible transfer of a propylamine group from the amino donor S-adenosylmethioninamine (decarboxy-AdoMet) to putrescine (1,4-diaminobutane) to yield spermidine. The chain is Polyamine aminopropyltransferase from Pyrococcus abyssi (strain GE5 / Orsay).